A 313-amino-acid polypeptide reads, in one-letter code: MASLADRVRGNGRIAAGLLFNLLVSICIVFLNKWIYVHHGFPNMSLTLVHFVVTWLGLYICQKLNIFAPKSLPLSKLLLLALSFCGFVVFTNLSLQNNTIGTYQLAKAMTTPVIIAIQTFWYQKRFSVRIQLTLIPITVGVILNSYYDVKFHSLGMVFAALGVVVTSLYQVWVGAKQHELQVNSMQLLYYQAPMSSAMLLVAVPFFEPVFAEGGIFGPWSVSALLMVLLSGIIAFMVNLSIYWIIGNTSPVTYNMFGHFKFCITLCGGYILFKDPLSVNQGLGILCTLFGILTYTHFKLSEQEGSKSKLVQRP.

Helical transmembrane passes span 17–37 (GLLF…WIYV), 40–60 (GFPN…GLYI), 71–91 (SLPL…VVFT), 126–146 (FSVR…LNSY), 154–174 (LGMV…VWVG), 187–206 (LLYY…VPFF), 225–245 (LMVL…YWII), 252–272 (TYNM…YILF), and 275–295 (PLSV…LTYT).

The protein belongs to the TPT transporter family. SLC35E subfamily.

Its subcellular location is the membrane. Functionally, putative transporter. This Mus musculus (Mouse) protein is Solute carrier family 35 member E3 (Slc35e3).